We begin with the raw amino-acid sequence, 432 residues long: Adenylosuccinate synthetase (432 aa).

GTP-binding positions include 13–19 (GDEGKGK) and 41–43 (GHT). Asp-14 (proton acceptor) is an active-site residue. Mg(2+)-binding residues include Asp-14 and Gly-41. IMP is bound by residues 14 to 17 (DEGK), 39 to 42 (NAGH), Thr-130, Arg-144, Gln-225, Thr-240, and Arg-304. His-42 (proton donor) is an active-site residue. 300-306 (ATTGRRR) serves as a coordination point for substrate. GTP-binding positions include Arg-306, 332–334 (KLD), and 415–417 (STG).

Belongs to the adenylosuccinate synthetase family. In terms of assembly, homodimer. Mg(2+) serves as cofactor.

The protein localises to the cytoplasm. It catalyses the reaction IMP + L-aspartate + GTP = N(6)-(1,2-dicarboxyethyl)-AMP + GDP + phosphate + 2 H(+). It participates in purine metabolism; AMP biosynthesis via de novo pathway; AMP from IMP: step 1/2. Plays an important role in the de novo pathway of purine nucleotide biosynthesis. Catalyzes the first committed step in the biosynthesis of AMP from IMP. The sequence is that of Adenylosuccinate synthetase from Enterobacter sp. (strain 638).